Here is a 219-residue protein sequence, read N- to C-terminus: Ribose-5-phosphate isomerase A (219 aa).

Residues 28-31 (SGST), 81-84 (DGAD), and 94-97 (KGGG) contribute to the substrate site. Glu103 acts as the Proton acceptor in catalysis. Lys121 contacts substrate.

The protein belongs to the ribose 5-phosphate isomerase family. As to quaternary structure, homodimer.

The catalysed reaction is aldehydo-D-ribose 5-phosphate = D-ribulose 5-phosphate. Its pathway is carbohydrate degradation; pentose phosphate pathway; D-ribose 5-phosphate from D-ribulose 5-phosphate (non-oxidative stage): step 1/1. Catalyzes the reversible conversion of ribose-5-phosphate to ribulose 5-phosphate. The chain is Ribose-5-phosphate isomerase A from Mannheimia succiniciproducens (strain KCTC 0769BP / MBEL55E).